The primary structure comprises 340 residues: GTPase Obg (340 aa).

The 159-residue stretch at 1–159 (MRFIDKAKIH…RWIELELKLI (159 aa)) folds into the Obg domain. The region spanning 160–331 (ADIGIIGFPN…LIKLIAEVYE (172 aa)) is the OBG-type G domain. GTP contacts are provided by residues 166–173 (GFPNAGKS), 191–195 (FTTLT), 213–216 (DIPG), 283–286 (NKID), and 312–314 (SLV). 2 residues coordinate Mg(2+): serine 173 and threonine 193.

This sequence belongs to the TRAFAC class OBG-HflX-like GTPase superfamily. OBG GTPase family. As to quaternary structure, monomer. Mg(2+) is required as a cofactor.

It is found in the cytoplasm. Its function is as follows. An essential GTPase which binds GTP, GDP and possibly (p)ppGpp with moderate affinity, with high nucleotide exchange rates and a fairly low GTP hydrolysis rate. Plays a role in control of the cell cycle, stress response, ribosome biogenesis and in those bacteria that undergo differentiation, in morphogenesis control. This Persephonella marina (strain DSM 14350 / EX-H1) protein is GTPase Obg.